Reading from the N-terminus, the 202-residue chain is MKALLLMSGGLDSSSAAYYYTRRGLDFDCLFINYGQRSARMQLRSSKIICEKLNKKLLVADIRKIRELFISDIWLKPHEPITHRNLVIIPIAIAFAKEKGYEEIIIASVKEDCEYEQNRIEIIKELKNLGEILKVKVSTPFAGMPKSFLLKLGVSAGLDPSLTYSCLLGHKYHCGQCSQCLKRKEAFKSANIQDPTKYLNLS.

7 to 17 provides a ligand contact to ATP; it reads MSGGLDSSSAA. Zn(2+)-binding residues include Cys166, Cys174, Cys177, and Cys180.

Belongs to the QueC family. Zn(2+) serves as cofactor.

It catalyses the reaction 7-carboxy-7-deazaguanine + NH4(+) + ATP = 7-cyano-7-deazaguanine + ADP + phosphate + H2O + H(+). The protein operates within purine metabolism; 7-cyano-7-deazaguanine biosynthesis. Its function is as follows. Catalyzes the ATP-dependent conversion of 7-carboxy-7-deazaguanine (CDG) to 7-cyano-7-deazaguanine (preQ(0)). This chain is 7-cyano-7-deazaguanine synthase 1 (queC1), found in Sulfurisphaera tokodaii (strain DSM 16993 / JCM 10545 / NBRC 100140 / 7) (Sulfolobus tokodaii).